The following is a 37-amino-acid chain: Cytochrome b6-f complex subunit 5 (37 aa).

A helical transmembrane segment spans residues 5 to 25 (LLSGIVLGLMPVTLAGLFTTA).

It belongs to the PetG family. As to quaternary structure, the 4 large subunits of the cytochrome b6-f complex are cytochrome b6, subunit IV (17 kDa polypeptide, PetD), cytochrome f and the Rieske protein, while the 4 small subunits are PetG, PetL, PetM and PetN. The complex functions as a dimer.

The protein localises to the plastid. It localises to the chloroplast thylakoid membrane. Component of the cytochrome b6-f complex, which mediates electron transfer between photosystem II (PSII) and photosystem I (PSI), cyclic electron flow around PSI, and state transitions. PetG is required for either the stability or assembly of the cytochrome b6-f complex. This Ostreococcus tauri protein is Cytochrome b6-f complex subunit 5.